The primary structure comprises 389 residues: Choline/ethanolaminephosphotransferase 1 (389 aa).

The helical transmembrane segment at 40–60 threads the bilayer; sequence VFPLWMPPNMITLMGFMFLVT. Residue N48 coordinates CDP-choline. D95 and D98 together coordinate Mg(2+). R103 contributes to the CDP-choline binding site. D116 provides a ligand contact to Mg(2+). The Proton acceptor role is filled by H117. D120 serves as a coordination point for Mg(2+). The next 7 membrane-spanning stretches (helical) occupy residues 141–161, 176–196, 221–241, 252–272, 280–300, 322–344, and 350–370; these read TFWF…EHYF, GLAL…EWWA, VLYM…VTNV, MVLA…VLIW, LIAT…GFLV, SLLY…GVPL, and VLLG…TSVI.

This sequence belongs to the CDP-alcohol phosphatidyltransferase class-I family. Requires Mg(2+) as cofactor. Mn(2+) is required as a cofactor.

Its subcellular location is the membrane. It catalyses the reaction CDP-ethanolamine + a 1,2-diacyl-sn-glycerol = a 1,2-diacyl-sn-glycero-3-phosphoethanolamine + CMP + H(+). The catalysed reaction is CDP-choline + a 1,2-diacyl-sn-glycerol = a 1,2-diacyl-sn-glycero-3-phosphocholine + CMP + H(+). The protein operates within phospholipid metabolism; phosphatidylethanolamine biosynthesis; phosphatidylethanolamine from ethanolamine: step 3/3. It participates in phospholipid metabolism; phosphatidylcholine biosynthesis; phosphatidylcholine from phosphocholine: step 2/2. Its function is as follows. Catalyzes both phosphatidylcholine and phosphatidylethanolamine biosynthesis from CDP-choline and CDP-ethanolamine, respectively. Has a higher cholinephosphotransferase activity than ethanolaminephosphotransferase activity. In Arabidopsis thaliana (Mouse-ear cress), this protein is Choline/ethanolaminephosphotransferase 1 (AAPT1).